The chain runs to 206 residues: Large ribosomal subunit protein uL4 (206 aa).

A disordered region spans residues 46 to 77 (GTRAQKDREQVKHSTKKPFKQKGTGNARAGMT).

The protein belongs to the universal ribosomal protein uL4 family. Part of the 50S ribosomal subunit.

In terms of biological role, one of the primary rRNA binding proteins, this protein initially binds near the 5'-end of the 23S rRNA. It is important during the early stages of 50S assembly. It makes multiple contacts with different domains of the 23S rRNA in the assembled 50S subunit and ribosome. Functionally, forms part of the polypeptide exit tunnel. This Acidovorax ebreus (strain TPSY) (Diaphorobacter sp. (strain TPSY)) protein is Large ribosomal subunit protein uL4.